The chain runs to 401 residues: DNA replication and repair protein RecF (401 aa).

Residue 30 to 37 coordinates ATP; the sequence is GYNGIGKT.

The protein belongs to the RecF family.

It is found in the cytoplasm. Functionally, the RecF protein is involved in DNA metabolism; it is required for DNA replication and normal SOS inducibility. RecF binds preferentially to single-stranded, linear DNA. It also seems to bind ATP. The protein is DNA replication and repair protein RecF of Arthrobacter sp. (strain FB24).